Here is a 325-residue protein sequence, read N- to C-terminus: Zinc metalloproteinase/disintegrin (325 aa).

Positions Lys-1 to Glu-39 are excised as a propeptide. At Gln-40 the chain carries Pyrrolidone carboxylic acid. One can recognise a Peptidase M12B domain in the interval Arg-46–Pro-242. His-182 is a binding site for Zn(2+). Residue Glu-183 is part of the active site. Zn(2+)-binding residues include His-186 and His-192. 2 disulfide bridges follow: Cys-197–Cys-221 and Cys-199–Cys-204. Positions Leu-243–Leu-257 are excised as a propeptide. In terms of domain architecture, Disintegrin spans Thr-250 to Phe-322. Pyrrolidone carboxylic acid is present on Gln-258. Disulfide bonds link Cys-264-Cys-287, Cys-278-Cys-284, Cys-283-Cys-308, and Cys-296-Cys-315. Positions Arg-300–Asp-302 match the Cell attachment site motif.

This sequence belongs to the venom metalloproteinase (M12B) family. P-II subfamily. P-IIe sub-subfamily. Heterodimer of bitisgabonin and gabonin-1 (bitisgabonin-1) or gabonin-2 (bitisgabonin-2); disulfide-linked. The cofactor is Zn(2+). In terms of tissue distribution, expressed by the venom gland.

It is found in the secreted. In terms of biological role, impairs hemostasis in the envenomed animal. Its function is as follows. In dimer with gabonin-1 (bitisgabonin-1), is a potent inhibitor of the adhesion of the RGD-dependent integrin alpha-5/beta-1 (ITGA5/ITGB1) to immobilized fibronectin. Functionally, in dimer with gabonin-2 (bitisgabonin-2), preferentially inhibits the adhesion of the alpha-4/beta-1 (ITGA4/ITGB1) and alpha-9/beta-1 (ITGA9/ITGB1) integrins to VCAM-1 and also acts as a strong antagonist of alpha-5/beta-1 (ITGA5/ITGB1). The protein is Zinc metalloproteinase/disintegrin of Bitis gabonica (Gaboon adder).